A 291-amino-acid chain; its full sequence is Kynurenine formamidase (291 aa).

The HGGXW motif lies at His-33–Trp-37. The active-site Nucleophile is Ser-107. Catalysis depends on residues Asp-242 and His-280.

This sequence belongs to the kynurenine formamidase family. Homodimer.

The enzyme catalyses N-formyl-L-kynurenine + H2O = L-kynurenine + formate + H(+). The protein operates within amino-acid degradation; L-tryptophan degradation via kynurenine pathway; L-kynurenine from L-tryptophan: step 2/2. Functionally, catalyzes the hydrolysis of N-formyl-L-kynurenine to L-kynurenine, the second step in the kynurenine pathway of tryptophan degradation. Kynurenine may be further oxidized to nicotinic acid, NAD(H) and NADP(H). Required for elimination of toxic metabolites. This chain is Kynurenine formamidase, found in Debaryomyces hansenii (strain ATCC 36239 / CBS 767 / BCRC 21394 / JCM 1990 / NBRC 0083 / IGC 2968) (Yeast).